The chain runs to 245 residues: Adenosylcobinamide-GDP ribazoletransferase (245 aa).

Transmembrane regions (helical) follow at residues 35–55 (WFPL…ALGL), 108–128 (IGAF…IGAH), 137–157 (GVLI…AALV), 176–196 (IAIG…TPAI), and 197–217 (TTVT…HLAR).

This sequence belongs to the CobS family. Requires Mg(2+) as cofactor.

It is found in the cell inner membrane. It carries out the reaction alpha-ribazole + adenosylcob(III)inamide-GDP = adenosylcob(III)alamin + GMP + H(+). It catalyses the reaction alpha-ribazole 5'-phosphate + adenosylcob(III)inamide-GDP = adenosylcob(III)alamin 5'-phosphate + GMP + H(+). It participates in cofactor biosynthesis; adenosylcobalamin biosynthesis; adenosylcobalamin from cob(II)yrinate a,c-diamide: step 7/7. Joins adenosylcobinamide-GDP and alpha-ribazole to generate adenosylcobalamin (Ado-cobalamin). Also synthesizes adenosylcobalamin 5'-phosphate from adenosylcobinamide-GDP and alpha-ribazole 5'-phosphate. The sequence is that of Adenosylcobinamide-GDP ribazoletransferase from Nitratidesulfovibrio vulgaris (strain ATCC 29579 / DSM 644 / CCUG 34227 / NCIMB 8303 / VKM B-1760 / Hildenborough) (Desulfovibrio vulgaris).